Here is a 1383-residue protein sequence, read N- to C-terminus: Palladin (1383 aa).

3 disordered regions span residues 1–22 (MSGT…EESK), 52–169 (DSET…SQLC), and 183–238 (FKAA…KSPG). A compositionally biased stretch (basic and acidic residues) spans 78–96 (HPSHKETKLGEHASRRPQD). Positions 191 to 201 (RSPNGESSSPD) are enriched in polar residues. S192 is subject to Phosphoserine. Low complexity predominate over residues 210–223 (QPSALLSASASQSP). Positions 271 to 360 (PRFIQKLRSQ…GSDTTSAEVF (90 aa)) constitute an Ig-like C2-type 1 domain. C292 and C344 are joined by a disulfide. S401 carries the post-translational modification Phosphoserine. Positions 440-539 (PPVFTKELQN…ATSTAQLVVT (100 aa)) constitute an Ig-like C2-type 2 domain. The cysteines at positions 462 and 521 are disulfide-linked. An interaction with VASP region spans residues 562-566 (FPPPP). Disordered regions lie at residues 609–653 (ETNG…LAKP), 673–728 (AGAR…SSGS), and 740–846 (AQNL…RFGH). S632 bears the Phosphoserine mark. T635 carries the phosphothreonine modification. S641 is modified (phosphoserine). Residues 646 to 676 (PPPLLAKPKLDPLKLQQLQNQIRLEQEAGAR) form an interaction with LASP1 region. Residues 676–696 (RQPPPAPRSAPPSPPFPPPPA) form an interaction with SORBS2, SPIN90 and SRC region. Pro residues predominate over residues 677-697 (QPPPAPRSAPPSPPFPPPPAF). Phosphoserine is present on residues S684, S688, and S728. Over residues 745 to 763 (PASGHGTPASSPSSSSLPS) the composition is skewed to low complexity. The interval 766–831 (SPTPRQFGRA…PPPPPPLPSP (66 aa)) is interaction with EPS8. Residues 796–831 (SPSPPPPPPPVFSPTAAFPVPDVFPLPPPPPPLPSP) are interaction with SORBS2, SPIN90, SRC and PFN1. Composition is skewed to pro residues over residues 797-807 (PSPPPPPPPVF) and 817-830 (DVFP…PLPS). The interval 819–823 (FPLPP) is interaction with VASP. Residues 832-846 (GQASHCSSPATRFGH) show a composition bias toward polar residues. The interaction with ACTN stretch occupies residues 833–890 (QASHCSSPATRFGHSQTPAAFLSALLPSQPPPAAVNALGLPKGVTPAGFPKKASRTAR). Phosphoserine occurs at positions 893, 979, and 984. The region spanning 1001–1085 (PFFEMKLKHY…MAANPQGRIS (85 aa)) is the Ig-like C2-type 3 domain. The disordered stretch occupies residues 1096–1125 (NQRGRSPRSPSGHPHVRRPRSRSRDSGDEN). The span at 1098–1108 (RGRSPRSPSGH) shows a compositional bias: low complexity. Phosphoserine is present on residues S1101, S1104, S1106, and S1116. S1118 is modified (phosphoserine; by PKB/AKT1). S1121 carries the post-translational modification Phosphoserine. Ig-like C2-type domains lie at 1135 to 1226 (PHFL…LVVA) and 1233 to 1324 (PPVF…ARLD). Interaction with EZR regions lie at residues 1137 to 1226 (FLQA…LVVA) and 1236 to 1326 (FIEK…LDVY). C1156 and C1208 are oxidised to a cystine. S1352 bears the Phosphoserine mark.

This sequence belongs to the myotilin/palladin family. As to quaternary structure, interacts with EPS8. Interacts with LASP1. Interacts with VASP. Interacts with ACTN. Interacts with SORBS2. Interacts with PFN1. Interacts with LPP. Interacts with SPIN90. Interacts with SRC. Interacts with EZR. Interacts with RAI14. Phosphorylated predominantly on serines and, to a lesser extent, on tyrosines. Phosphorylation at Ser-1118 by PKB/AKT1 modulates cytoskeletal organization and cell motility. Detected in both muscle and non-muscle tissues. High expression in prostate, ovary, colon, and kidney. Not detected in spleen, skeletal muscle, lung and peripheral blood lymphocytes (at protein level). Protein is overexpressed in FA6, HPAF, IMIM-PC2, SUIT-2 and PancTu-II sporadic pancreatic cancer cell lines.

Its subcellular location is the cytoplasm. It is found in the cytoskeleton. The protein resides in the cell junction. The protein localises to the focal adhesion. It localises to the myofibril. Its subcellular location is the sarcomere. It is found in the z line. The protein resides in the cell projection. The protein localises to the ruffle. It localises to the podosome. Its subcellular location is the lamellipodium. It is found in the axon. The protein resides in the growth cone. Cytoskeletal protein required for organization of normal actin cytoskeleton. Roles in establishing cell morphology, motility, cell adhesion and cell-extracellular matrix interactions in a variety of cell types. May function as a scaffolding molecule with the potential to influence both actin polymerization and the assembly of existing actin filaments into higher-order arrays. Binds to proteins that bind to either monomeric or filamentous actin. Localizes at sites where active actin remodeling takes place, such as lamellipodia and membrane ruffles. Different isoforms may have functional differences. Involved in the control of morphological and cytoskeletal changes associated with dendritic cell maturation. Involved in targeting ACTN to specific subcellular foci. In Homo sapiens (Human), this protein is Palladin (PALLD).